Consider the following 198-residue polypeptide: Glutamyl-tRNA(Gln) amidotransferase subunit C, mitochondrial (198 aa).

The protein belongs to the GatC family. As to quaternary structure, subunit of the heterotrimeric GatCAB amidotransferase (AdT) complex, composed of A, B and C subunits.

It localises to the mitochondrion. It catalyses the reaction L-glutamyl-tRNA(Gln) + L-glutamine + ATP + H2O = L-glutaminyl-tRNA(Gln) + L-glutamate + ADP + phosphate + H(+). Its function is as follows. Allows the formation of correctly charged Gln-tRNA(Gln) through the transamidation of misacylated Glu-tRNA(Gln) in the mitochondria. The reaction takes place in the presence of glutamine and ATP through an activated gamma-phospho-Glu-tRNA(Gln). This Caenorhabditis remanei (Caenorhabditis vulgaris) protein is Glutamyl-tRNA(Gln) amidotransferase subunit C, mitochondrial.